Here is a 201-residue protein sequence, read N- to C-terminus: Large ribosomal subunit protein uL4 (201 aa).

The disordered stretch occupies residues 44–71; that stretch reads RAQKTRAEVTGSGKKPWRQKGTGRARSG.

Belongs to the universal ribosomal protein uL4 family. As to quaternary structure, part of the 50S ribosomal subunit.

Functionally, one of the primary rRNA binding proteins, this protein initially binds near the 5'-end of the 23S rRNA. It is important during the early stages of 50S assembly. It makes multiple contacts with different domains of the 23S rRNA in the assembled 50S subunit and ribosome. In terms of biological role, forms part of the polypeptide exit tunnel. In Shigella flexneri serotype 5b (strain 8401), this protein is Large ribosomal subunit protein uL4.